Here is a 779-residue protein sequence, read N- to C-terminus: Translation initiation factor IF-2 (779 aa).

The interval 44–193 (RQLDNAVDGT…TPPKPKELPE (150 aa)) is disordered. Positions 53-65 (TNKKAEAPKKETT) are enriched in basic and acidic residues. Polar residues predominate over residues 66–81 (SNENGNSKGPNKPNMT). 2 stretches are compositionally biased toward low complexity: residues 82–93 (NSNEKSNKPNKP) and 117–167 (ANTS…NNKG). The region spanning 280–449 (ERPPVVTIMG…LLVSEVEELK (170 aa)) is the tr-type G domain. Residues 289–296 (GHVDHGKT) are G1. 289-296 (GHVDHGKT) lines the GTP pocket. The tract at residues 314–318 (GITQH) is G2. The interval 335–338 (DTPG) is G3. GTP is bound by residues 335 to 339 (DTPGH) and 389 to 392 (NKID). Residues 389 to 392 (NKID) form a G4 region. Residues 425-427 (SAK) form a G5 region.

It belongs to the TRAFAC class translation factor GTPase superfamily. Classic translation factor GTPase family. IF-2 subfamily.

It is found in the cytoplasm. In terms of biological role, one of the essential components for the initiation of protein synthesis. Protects formylmethionyl-tRNA from spontaneous hydrolysis and promotes its binding to the 30S ribosomal subunits. Also involved in the hydrolysis of GTP during the formation of the 70S ribosomal complex. The polypeptide is Translation initiation factor IF-2 (Listeria monocytogenes serovar 1/2a (strain ATCC BAA-679 / EGD-e)).